A 656-amino-acid polypeptide reads, in one-letter code: Threonine--tRNA ligase (656 aa).

One can recognise a TGS domain in the interval 1 to 63; sequence MAEIQLTFPD…LEDGAIEIIT (63 aa). The segment at 243–541 is catalytic; sequence DHRVIGNQLD…LTEIYKGAFP (299 aa). The Zn(2+) site is built by cysteine 337, histidine 388, and histidine 518.

The protein belongs to the class-II aminoacyl-tRNA synthetase family. Homodimer. Zn(2+) is required as a cofactor.

The protein localises to the cytoplasm. The catalysed reaction is tRNA(Thr) + L-threonine + ATP = L-threonyl-tRNA(Thr) + AMP + diphosphate + H(+). Functionally, catalyzes the attachment of threonine to tRNA(Thr) in a two-step reaction: L-threonine is first activated by ATP to form Thr-AMP and then transferred to the acceptor end of tRNA(Thr). Also edits incorrectly charged L-seryl-tRNA(Thr). This chain is Threonine--tRNA ligase, found in Latilactobacillus sakei subsp. sakei (strain 23K) (Lactobacillus sakei subsp. sakei).